A 157-amino-acid polypeptide reads, in one-letter code: Protein Smg homolog (157 aa).

The protein belongs to the Smg family.

The sequence is that of Protein Smg homolog from Shewanella denitrificans (strain OS217 / ATCC BAA-1090 / DSM 15013).